We begin with the raw amino-acid sequence, 332 residues long: Beta-ketoacyl-[acyl-carrier-protein] synthase III 2 (332 aa).

Catalysis depends on residues Cys-115 and His-252. Residues 253-257 (SANLR) are ACP-binding. Asn-282 is a catalytic residue.

It belongs to the thiolase-like superfamily. FabH family. In terms of assembly, homodimer.

The protein localises to the cytoplasm. It carries out the reaction malonyl-[ACP] + acetyl-CoA + H(+) = 3-oxobutanoyl-[ACP] + CO2 + CoA. It participates in lipid metabolism; fatty acid biosynthesis. In terms of biological role, catalyzes the condensation reaction of fatty acid synthesis by the addition to an acyl acceptor of two carbons from malonyl-ACP. Catalyzes the first condensation reaction which initiates fatty acid synthesis and may therefore play a role in governing the total rate of fatty acid production. Possesses both acetoacetyl-ACP synthase and acetyl transacylase activities. Its substrate specificity determines the biosynthesis of branched-chain and/or straight-chain of fatty acids. The protein is Beta-ketoacyl-[acyl-carrier-protein] synthase III 2 of Halalkalibacterium halodurans (strain ATCC BAA-125 / DSM 18197 / FERM 7344 / JCM 9153 / C-125) (Bacillus halodurans).